The chain runs to 218 residues: 3,4-dihydroxy-2-butanone 4-phosphate synthase (218 aa).

D-ribulose 5-phosphate is bound by residues 38–39 (RE), Asp-43, 151–155 (RRGHT), and Glu-175. Mg(2+) is bound at residue Glu-39. A Mg(2+)-binding site is contributed by His-154.

The protein belongs to the DHBP synthase family. As to quaternary structure, homodimer. Mg(2+) is required as a cofactor. It depends on Mn(2+) as a cofactor.

It catalyses the reaction D-ribulose 5-phosphate = (2S)-2-hydroxy-3-oxobutyl phosphate + formate + H(+). It functions in the pathway cofactor biosynthesis; riboflavin biosynthesis; 2-hydroxy-3-oxobutyl phosphate from D-ribulose 5-phosphate: step 1/1. Catalyzes the conversion of D-ribulose 5-phosphate to formate and 3,4-dihydroxy-2-butanone 4-phosphate. This is 3,4-dihydroxy-2-butanone 4-phosphate synthase from Vibrio atlanticus (strain LGP32) (Vibrio splendidus (strain Mel32)).